Consider the following 527-residue polypeptide: Bifunctional purine biosynthesis protein PurH (527 aa).

One can recognise an MGS-like domain in the interval 1–149; it reads MASDFLPVRR…KNFARVAVAT (149 aa).

It belongs to the PurH family.

It catalyses the reaction (6R)-10-formyltetrahydrofolate + 5-amino-1-(5-phospho-beta-D-ribosyl)imidazole-4-carboxamide = 5-formamido-1-(5-phospho-D-ribosyl)imidazole-4-carboxamide + (6S)-5,6,7,8-tetrahydrofolate. The catalysed reaction is IMP + H2O = 5-formamido-1-(5-phospho-D-ribosyl)imidazole-4-carboxamide. Its pathway is purine metabolism; IMP biosynthesis via de novo pathway; 5-formamido-1-(5-phospho-D-ribosyl)imidazole-4-carboxamide from 5-amino-1-(5-phospho-D-ribosyl)imidazole-4-carboxamide (10-formyl THF route): step 1/1. It participates in purine metabolism; IMP biosynthesis via de novo pathway; IMP from 5-formamido-1-(5-phospho-D-ribosyl)imidazole-4-carboxamide: step 1/1. The polypeptide is Bifunctional purine biosynthesis protein PurH (Xanthomonas oryzae pv. oryzae (strain PXO99A)).